Here is a 392-residue protein sequence, read N- to C-terminus: Zinc finger protein ham-2 (392 aa).

2 consecutive C2H2-type zinc fingers follow at residues 16 to 39 and 43 to 66; these read FPCS…MQAH and YTCT…YRVH. The C2H2-type 3; degenerate zinc-finger motif lies at 72 to 95; the sequence is FMCRCCNWAFPDKTSLHIHMQSML. Disordered stretches follow at residues 106–130 and 278–303; these read LAKS…PFSP and HISH…HSGE. The segment covering 112–123 has biased composition (polar residues); it reads VVDSTSESGSPR. The span at 289-303 shows a compositional bias: low complexity; it reads SDSHISGGSSSHSGE.

The protein localises to the nucleus. Functionally, probable transcription factor that acts downstream of egl-15, to promote migration of the HSN motor neurons from the tail to the gonad primordium during HSN cell differentiation. The sequence is that of Zinc finger protein ham-2 from Caenorhabditis elegans.